Consider the following 414-residue polypeptide: Gamma-glutamyl phosphate reductase (414 aa).

Belongs to the gamma-glutamyl phosphate reductase family.

The protein resides in the cytoplasm. It carries out the reaction L-glutamate 5-semialdehyde + phosphate + NADP(+) = L-glutamyl 5-phosphate + NADPH + H(+). It participates in amino-acid biosynthesis; L-proline biosynthesis; L-glutamate 5-semialdehyde from L-glutamate: step 2/2. Catalyzes the NADPH-dependent reduction of L-glutamate 5-phosphate into L-glutamate 5-semialdehyde and phosphate. The product spontaneously undergoes cyclization to form 1-pyrroline-5-carboxylate. The polypeptide is Gamma-glutamyl phosphate reductase (Caldanaerobacter subterraneus subsp. tengcongensis (strain DSM 15242 / JCM 11007 / NBRC 100824 / MB4) (Thermoanaerobacter tengcongensis)).